The following is a 513-amino-acid chain: Abl interactor 2 (513 aa).

Ser-40 carries the post-translational modification Phosphoserine. Residues 45-107 (RALEETKAYT…DIHKEKVARR (63 aa)) form the t-SNARE coiled-coil homology domain. Residues 167 to 431 (KMGGLPRTTP…PPEDYEEEEA (265 aa)) are disordered. The segment covering 174–185 (TTPPTQKPPSPP) has biased composition (pro residues). 2 positions are modified to phosphoserine: Ser-183 and Ser-227. Positions 217–241 (PTRNMAPSQQSPVRTASVNQRNRTY) are enriched in polar residues. The segment covering 242 to 272 (SSSGSSGGSHPSSRSSSRENSGSGSVGVPIA) has biased composition (low complexity). Residues 273–282 (VPTPSPPSVF) are compositionally biased toward pro residues. A compositionally biased stretch (low complexity) spans 283–325 (PAPAGSAGTPPLPATSASAPAPLVPATVPSSTAPNAAAGGAPN). Thr-361 is subject to Phosphothreonine. Ser-368 is modified (phosphoserine). Residues 376 to 399 (SITSQTSLQNQMNGGPFYSQNPVS) show a composition bias toward polar residues. Pro residues predominate over residues 400–409 (DTPPPPPPVE). An SH3 domain is found at 451–510 (SYLEKVVAIYDYTKDKEDELSFQEGAIIYVIKKNDDGWYEGVMNGVTGLFPGNYVESIMH).

This sequence belongs to the ABI family. As to quaternary structure, component of the WAVE complex composed of ABI2, CYFIP1 or CYFIP2, BRK1, NCKAP1 and WASF1/WAVE1. Within the complex, a heterodimer containing NCKAP1 and CYFIP1 interacts with a heterotrimer formed by WAVE1, ABI2 and BRK1. CYFIP2 binds to activated RAC1 which causes the complex to dissociate, releasing activated WASF1. Interacts (via SH3 domain) with ABL1 and ABL2. (Microbial infection) Interacts with human cytomegalovirus UL135. Post-translationally, phosphorylated by ABL1. Widely expressed. Abundant in testes, ovary, thymus, and colon, with lower but detectable levels in prostate, peripheral blood leukocytes, and spleen.

It is found in the cytoplasm. It localises to the nucleus. The protein localises to the cell projection. The protein resides in the lamellipodium. Its subcellular location is the filopodium. It is found in the cytoskeleton. It localises to the cell junction. The protein localises to the adherens junction. Its function is as follows. Regulator of actin cytoskeleton dynamics underlying cell motility and adhesion. Functions as a component of the WAVE complex, which activates actin nucleating machinery Arp2/3 to drive lamellipodia formation. Acts as a regulator and substrate of nonreceptor tyrosine kinases ABL1 and ABL2 involved in processes linked to cell growth and differentiation. Positively regulates ABL1-mediated phosphorylation of ENAH, which is required for proper polymerization of nucleated actin filaments at the leading edge. Contributes to the regulation of actin assembly at the tips of neuron projections. In particular, controls dendritic spine morphogenesis and may promote dendritic spine specification toward large mushroom-type spines known as repositories of memory in the brain. In hippocampal neurons, may mediate actin-dependent BDNF-NTRK2 early endocytic trafficking that triggers dendrite outgrowth. Participates in ocular lens morphogenesis, likely by regulating lamellipodia-driven adherens junction formation at the epithelial cell-secondary lens fiber interface. Also required for nascent adherens junction assembly in epithelial cells. The chain is Abl interactor 2 from Homo sapiens (Human).